The sequence spans 270 residues: Tryptophan synthase alpha chain (270 aa).

Residues glutamate 50 and aspartate 61 each act as proton acceptor in the active site.

Belongs to the TrpA family. As to quaternary structure, tetramer of two alpha and two beta chains.

It catalyses the reaction (1S,2R)-1-C-(indol-3-yl)glycerol 3-phosphate + L-serine = D-glyceraldehyde 3-phosphate + L-tryptophan + H2O. Its pathway is amino-acid biosynthesis; L-tryptophan biosynthesis; L-tryptophan from chorismate: step 5/5. The alpha subunit is responsible for the aldol cleavage of indoleglycerol phosphate to indole and glyceraldehyde 3-phosphate. The protein is Tryptophan synthase alpha chain of Chlorobium luteolum (strain DSM 273 / BCRC 81028 / 2530) (Pelodictyon luteolum).